Here is a 571-residue protein sequence, read N- to C-terminus: E3 ubiquitin-protein ligase ipaH3 (571 aa).

Positions 1-260 (MSIMLPINNN…SQQTAQPDYH (260 aa)) are interaction with target proteins. LRR repeat units lie at residues 58-81 (INQF…LPPQ), 83-99 (TVLE…PELP), 100-119 (ASLE…PELP), 120-144 (ASLK…LLEY), 146-159 (NADN…PELP), 160-184 (TSLE…SLEA), 186-202 (DVST…PVRN), 205-229 (SEET…ILSL), and 232-260 (TCTI…PDYH). The segment at 269-278 (SDGQQNTLHR) is linker. The NEL domain maps to 279-571 (PLADAVTAWF…SENGSQLHHS (293 aa)). The interval 279–571 (PLADAVTAWF…SENGSQLHHS (293 aa)) is E3 ubiquitin-protein ligase catalytic domain. Cys363 (glycyl thioester intermediate) is an active-site residue.

It belongs to the LRR-containing bacterial E3 ligase family. In terms of processing, ubiquitinated in the presence of host E1 ubiquitin-activating enzyme, E2 ubiquitin-conjugating enzyme UBE2D3 and ubiquitin.

The protein localises to the secreted. The protein resides in the host cytoplasm. The catalysed reaction is S-ubiquitinyl-[E2 ubiquitin-conjugating enzyme]-L-cysteine + [acceptor protein]-L-lysine = [E2 ubiquitin-conjugating enzyme]-L-cysteine + N(6)-ubiquitinyl-[acceptor protein]-L-lysine.. Its function is as follows. Effector proteins function to alter host cell physiology and promote bacterial survival in host tissues. This protein is an E3 ubiquitin ligase that interferes with host's ubiquitination pathway. Synthesizes a 'Lys-48'-linked ubiquitin chain, which requires non-covalent binding between ubiquitin and the host ubiquitin-conjugating enzyme UBE2D1. The sequence is that of E3 ubiquitin-protein ligase ipaH3 (ipaH3) from Shigella flexneri.